A 198-amino-acid polypeptide reads, in one-letter code: Small ribosomal subunit protein uS4c (198 aa).

Residues 17-40 (TLPGLTSKRPKNRKDSMNRSSSRK) form a disordered region. The S4 RNA-binding domain maps to 88–154 (MRLDKSFSIG…IKKNIDLFQR (67 aa)).

The protein belongs to the universal ribosomal protein uS4 family. In terms of assembly, part of the 30S ribosomal subunit. Contacts protein S5. The interaction surface between S4 and S5 is involved in control of translational fidelity.

It localises to the plastid. It is found in the chloroplast. Functionally, one of the primary rRNA binding proteins, it binds directly to 16S rRNA where it nucleates assembly of the body of the 30S subunit. With S5 and S12 plays an important role in translational accuracy. The sequence is that of Small ribosomal subunit protein uS4c (rps4) from Pinus thunbergii (Japanese black pine).